We begin with the raw amino-acid sequence, 357 residues long: Serine/threonine-protein kinase nekl-2 (357 aa).

In terms of domain architecture, Protein kinase spans 4–267 (YEKVRVVGRG…VSQLLSDPLV (264 aa)). Residues 10–18 (VGRGAFGVC) and Lys35 contribute to the ATP site. Residue Asp137 is the Proton acceptor of the active site. A compositionally biased stretch (basic and acidic residues) spans 281–290 (IEPPPTDKRK). Residues 281–357 (IEPPPTDKRK…QSRSQVHSKY (77 aa)) form a disordered region. 2 stretches are compositionally biased toward polar residues: residues 293-327 (ASLSSRLRTYPTQSTLRPYSLSSNAPTTHLTQLTP) and 336-357 (FFSSGRTSNQRTQSRSQVHSKY).

Belongs to the protein kinase superfamily. NEK Ser/Thr protein kinase family. NIMA subfamily. Mg(2+) serves as cofactor. Expressed in hypodermal cells including in hyp7 syncytium but not in seam cells.

The protein resides in the cytoplasm. It catalyses the reaction L-seryl-[protein] + ATP = O-phospho-L-seryl-[protein] + ADP + H(+). The enzyme catalyses L-threonyl-[protein] + ATP = O-phospho-L-threonyl-[protein] + ADP + H(+). Probable serine/threonine-protein kinase required for the completion of molting. May play a role in endocytosis in the hypodermis syncytium. In Caenorhabditis elegans, this protein is Serine/threonine-protein kinase nekl-2.